The following is a 402-amino-acid chain: Uroporphyrinogen decarboxylase 1, chloroplastic (402 aa).

Residues 1–50 (MISATATAAFLAAAPASSSSCTTHRRRSGLPAISASLATASSTEEPLLVR) constitute a chloroplast transit peptide. Substrate is bound by residues 67–71 (RQAGR), phenylalanine 86, serine 116, aspartate 117, tyrosine 193, serine 248, and histidine 363.

The protein belongs to the uroporphyrinogen decarboxylase family. Homodimer.

It is found in the plastid. It localises to the chloroplast. It carries out the reaction uroporphyrinogen III + 4 H(+) = coproporphyrinogen III + 4 CO2. Its pathway is porphyrin-containing compound metabolism; protoporphyrin-IX biosynthesis; coproporphyrinogen-III from 5-aminolevulinate: step 4/4. Functionally, catalyzes the decarboxylation of four acetate groups of uroporphyrinogen-III to yield coproporphyrinogen-III. This chain is Uroporphyrinogen decarboxylase 1, chloroplastic, found in Oryza sativa subsp. japonica (Rice).